We begin with the raw amino-acid sequence, 257 residues long: Ubiquinone biosynthesis O-methyltransferase (257 aa).

The S-adenosyl-L-methionine site is built by Arg-43, Gly-77, Asp-98, and Met-144.

The protein belongs to the methyltransferase superfamily. UbiG/COQ3 family.

It carries out the reaction a 3-demethylubiquinol + S-adenosyl-L-methionine = a ubiquinol + S-adenosyl-L-homocysteine + H(+). The enzyme catalyses a 3-(all-trans-polyprenyl)benzene-1,2-diol + S-adenosyl-L-methionine = a 2-methoxy-6-(all-trans-polyprenyl)phenol + S-adenosyl-L-homocysteine + H(+). It participates in cofactor biosynthesis; ubiquinone biosynthesis. Functionally, O-methyltransferase that catalyzes the 2 O-methylation steps in the ubiquinone biosynthetic pathway. In Psychrobacter cryohalolentis (strain ATCC BAA-1226 / DSM 17306 / VKM B-2378 / K5), this protein is Ubiquinone biosynthesis O-methyltransferase.